The chain runs to 1264 residues: Valine--tRNA ligase (1264 aa).

At Ser2 the chain carries N-acetylserine. One can recognise a GST C-terminal domain in the interval 89 to 219 (GSRAAVLVQQ…YSGARSVTQQ (131 aa)). The span at 218-230 (QQPGSEITAPQKT) shows a compositional bias: polar residues. Residues 218-296 (QQPGSEITAP…GEKKDVSGTM (79 aa)) form a disordered region. Basic and acidic residues-rich tracts occupy residues 234 to 248 (LKKE…EKFQ) and 260 to 275 (HGEK…KRDP). Residues 344 to 354 (PNVTGSLHLGH) carry the 'HIGH' region motif. Residues Ser437 and Ser527 each carry the phosphoserine modification. Lys645 is modified (N6-acetyllysine). Residues 862–866 (KMSKS) carry the 'KMSKS' region motif. Residue Lys865 participates in ATP binding.

The protein belongs to the class-I aminoacyl-tRNA synthetase family. In terms of assembly, forms high-molecular-mass aggregates with elongation factor 1.

It catalyses the reaction tRNA(Val) + L-valine + ATP = L-valyl-tRNA(Val) + AMP + diphosphate. Its activity is regulated as follows. Can be regulated by protein kinase C-dependent phosphorylation. The polypeptide is Valine--tRNA ligase (Vars1) (Rattus norvegicus (Rat)).